We begin with the raw amino-acid sequence, 227 residues long: Octanoyltransferase (227 aa).

Positions 43–218 (ADSQDELWIV…TFTKTLGYQE (176 aa)) constitute a BPL/LPL catalytic domain. Residues 82-89 (RGGQVTYH), 149-151 (SLG), and 162-164 (GLA) contribute to the substrate site. The active-site Acyl-thioester intermediate is Cys-180.

It belongs to the LipB family.

The protein localises to the cytoplasm. The enzyme catalyses octanoyl-[ACP] + L-lysyl-[protein] = N(6)-octanoyl-L-lysyl-[protein] + holo-[ACP] + H(+). The protein operates within protein modification; protein lipoylation via endogenous pathway; protein N(6)-(lipoyl)lysine from octanoyl-[acyl-carrier-protein]: step 1/2. Catalyzes the transfer of endogenously produced octanoic acid from octanoyl-acyl-carrier-protein onto the lipoyl domains of lipoate-dependent enzymes. Lipoyl-ACP can also act as a substrate although octanoyl-ACP is likely to be the physiological substrate. The protein is Octanoyltransferase of Shewanella denitrificans (strain OS217 / ATCC BAA-1090 / DSM 15013).